A 450-amino-acid polypeptide reads, in one-letter code: Phosphoglucosamine mutase (450 aa).

Catalysis depends on Ser-102, which acts as the Phosphoserine intermediate. Mg(2+) is bound by residues Ser-102, Asp-244, Asp-246, and Asp-248. Ser-102 carries the phosphoserine modification.

It belongs to the phosphohexose mutase family. Mg(2+) is required as a cofactor. Activated by phosphorylation.

It carries out the reaction alpha-D-glucosamine 1-phosphate = D-glucosamine 6-phosphate. Catalyzes the conversion of glucosamine-6-phosphate to glucosamine-1-phosphate. This chain is Phosphoglucosamine mutase, found in Nitratidesulfovibrio vulgaris (strain DSM 19637 / Miyazaki F) (Desulfovibrio vulgaris).